The chain runs to 100 residues: C-X-C motif chemokine 2 (100 aa).

The first 27 residues, 1-27 (MAPPTCRLLSAALVLLLLLATNHQATG), serve as a signal peptide directing secretion. 2 disulfides stabilise this stretch: Cys36/Cys62 and Cys38/Cys78.

This sequence belongs to the intercrine alpha (chemokine CxC) family. As to quaternary structure, homotetramer.

The protein localises to the secreted. Functionally, chemotactic for human polymorphonuclear leukocytes but does not induce chemokinesis or an oxidative burst. The sequence is that of C-X-C motif chemokine 2 (Cxcl2) from Mus musculus (Mouse).